We begin with the raw amino-acid sequence, 234 residues long: Fibronectin type III domain-containing protein 4 (234 aa).

Residues 1-44 (MPSGCHSSPPSGLRGDMASLVPLSPYLSPTVLLLVSCDLGFVRA) form the signal peptide. The Extracellular portion of the chain corresponds to 45–167 (DRPPSPVNVT…GLDGERPLQT (123 aa)). The region spanning 47–140 (PPSPVNVTVT…PRVHFRTLKG (94 aa)) is the Fibronectin type-III domain. N-linked (GlcNAc...) asparagine glycosylation is found at asparagine 52, asparagine 97, and asparagine 147. Residues 122–160 (GLRGESPPGPRVHFRTLKGSDRLPSNSSSPGDITVEGLD) are disordered. A helical membrane pass occupies residues 168–188 (GEVVIIVVVLLMWAAVIGLFC). Topologically, residues 189–234 (RQYDIIKDNDSNNNPKEKGKGPEQSPQGRPVGTRQKKSPSINTIDV) are cytoplasmic. Basic and acidic residues predominate over residues 197-209 (NDSNNNPKEKGKG). The segment at 197–234 (NDSNNNPKEKGKGPEQSPQGRPVGTRQKKSPSINTIDV) is disordered.

Highly expressed in the liver and the brain, including in the cortex, hypothalamus and hippocampus. Also expressed in adipose tissue.

It localises to the membrane. The protein resides in the secreted. Its function is as follows. Has anti-inflammatory properties. In the colon, acts on macrophages to down-regulate inflammation. May suppress osteoclastogenesis and mature osteoclast resorptive function. In white adipose tissue, decreases local inflammation, via interaction with GPR116. Also required for proper systemic glucose tolerance, specifically sensitizing white adipocytes to insulin and promoting glucose uptake. The insulin sensitizing function in adipose tissue is mediated by interaction with ADGRF5/GPR116 and activation of cAMP signaling. The polypeptide is Fibronectin type III domain-containing protein 4 (FNDC4) (Homo sapiens (Human)).